The chain runs to 338 residues: Lumican (338 aa).

A signal peptide spans 1–18 (MSLSAFTLFLALIGGTSG). Glutamine 19 is subject to Pyrrolidone carboxylic acid. 4 positions are modified to sulfotyrosine: tyrosine 20, tyrosine 21, tyrosine 23, and tyrosine 30. In terms of domain architecture, LRRNT spans 28–66 (SIYGQSSPNCAPECNCPESYPSAMYCDELKLKSVPMVPP). LRR repeat units lie at residues 67–88 (GIKYLYLRNNQIDHIDEKAFEN), 91–114 (DLQWLILDHNLLENSKIKGRVFSK), 117–137 (QLKKLHINHNNLTESVGPLPK), 138–159 (SLEDLQLTHNKITKLGSFEGLV), 160–181 (NLTFIHLQHNRLKEDAVSAAFK), 185–205 (SLEYLDLSFNQIARLPSGLPV), 206–227 (SLLTLYLDNNKISNIPDEYFKR), 230–253 (ALQYLRLSHNELADSGIPGNSFNV), 255–276 (SLVELDLSYNKLKNIPTVNENL), and 277–296 (ENYYLEVNQLEKFDIKSFCK). Asparagine 88 carries an N-linked (GlcNAc...) (keratan sulfate) asparagine glycan. N-linked (GlcNAc...) (keratan sulfate) asparagine glycosylation occurs at asparagine 127. Asparagine 160 carries N-linked (GlcNAc...) (keratan sulfate) asparagine glycosylation. Asparagine 252 is a glycosylation site (N-linked (GlcNAc...) (keratan sulfate) asparagine). A disulfide bridge links cysteine 295 with cysteine 328. The residue at position 304 (serine 304) is a Phosphoserine. One copy of the LRR 11 repeat lies at 305 to 326 (KIKHLRLDGNRISETSLPPDMY).

This sequence belongs to the small leucine-rich proteoglycan (SLRP) family. SLRP class II subfamily. In terms of assembly, binds to laminin. Sulfated on tyrosine residue(s). Post-translationally, contains keratan sulfate. Cornea and other tissues.

The protein resides in the secreted. It localises to the extracellular space. The protein localises to the extracellular matrix. The sequence is that of Lumican (LUM) from Homo sapiens (Human).